Reading from the N-terminus, the 1084-residue chain is Histone deacetylase 4 (1084 aa).

Residues 67–177 (REQQLQQELL…STEVKMKLQE (111 aa)) are a coiled coil. The segment at 118–313 (MLAMKHQQEL…NNSSGSVSAE (196 aa)) is interaction with MEF2A. Positions 133–163 (KLERHRQEQELEKQHREQKLQQLKNKEKGKE) are enriched in basic and acidic residues. 3 disordered regions span residues 133-166 (KLER…ESAV), 206-226 (TQHS…TSYN), and 240-315 (PLRK…AENG). Position 210 is a phosphoserine (serine 210). At serine 246 the chain carries Phosphoserine; by CaMK4 and SIK1. The segment covering 259 to 274 (KVAERRSSPLLRRKDG) has biased composition (basic and acidic residues). Over residues 290 to 312 (SACSSAPGSGPSSPNNSSGSVSA) the composition is skewed to low complexity. Positions 349–354 (PSLPNI) match the PxLPxI/L motif; mediates interaction with ANKRA2 and 14-3-3 proteins motif. Residue serine 350 is modified to Phosphoserine. Residue serine 467 is modified to Phosphoserine; by CaMK4 and SIK1. Disordered stretches follow at residues 509 to 531 (PKPS…ELRE), 548 to 585 (KEAH…QPSE), and 626 to 646 (PLSR…VQEP). A compositionally biased stretch (basic and acidic residues) spans 516 to 531 (RQPESHPEETEEELRE). Residue lysine 559 forms a Glycyl lysine isopeptide (Lys-Gly) (interchain with G-Cter in SUMO) linkage. Serine 565 is modified (phosphoserine). Over residues 629 to 641 (RAQSSPASATFPV) the composition is skewed to polar residues. Residue serine 632 is modified to Phosphoserine; by CaMK4. Serine 633 is subject to Phosphoserine. Residues 655-1084 (GLVYDTLMLK…EEPMEEEPPL (430 aa)) are histone deacetylase. Zn(2+)-binding residues include cysteine 667, cysteine 669, histidine 675, and cysteine 751. The active site involves histidine 803. The Nuclear export signal motif lies at 1051 to 1084 (EEAETVTAMASLSVGVKPAEKRPDEEPMEEEPPL). Positions 1061–1084 (SLSVGVKPAEKRPDEEPMEEEPPL) are disordered.

Belongs to the histone deacetylase family. HD type 2 subfamily. In terms of assembly, homodimer. Homodimerization via its N-terminal domain. Interacts with MEF2A. Interacts with MEF2C and MEF2D. Interacts with AHRR. Interacts with NR2C1. Interacts with HDAC7. Interacts with a 14-3-3 chaperone proteins in a phosphorylation dependent manner. Interacts with 14-3-3 protein YWHAB. Interacts with BTBD14B. Interacts with KDM5B. Interacts with MYOCD. Interacts with MORC2. Interacts (via PxLPxI/L motif) with ANKRA2 (via ankyrin repeats). Interacts with CUL7 (as part of the 3M complex); negatively regulated by ANKRA2. Interacts with EP300 in the presence of TFAP2C. Interacts with HSPA1A and HSPA1B leading to their deacetylation at 'Lys-77'. Interacts with ZBTB7B; the interaction allows the recruitment of HDAC4 on CD8 loci for deacetylation and possible inhibition of CD8 genes expression. Interacts with DHX36. Interacts with SIK3; this interaction leads to HDAC4 retention in the cytoplasm. Interacts with ZNF638. Post-translationally, phosphorylated by CaMK4 at Ser-246, Ser-467 and Ser-632. Phosphorylation at other residues by CaMK2D is required for the interaction with 14-3-3. Phosphorylation at Ser-350, within the PxLPxI/L motif, impairs the binding of ANKRA2 but generates a high-affinity docking site for 14-3-3. In terms of processing, sumoylation on Lys-559 is promoted by the E3 SUMO-protein ligase RANBP2, and prevented by phosphorylation by CaMK4. Ubiquitous.

The protein localises to the nucleus. Its subcellular location is the cytoplasm. The enzyme catalyses N(6)-acetyl-L-lysyl-[histone] + H2O = L-lysyl-[histone] + acetate. Functionally, responsible for the deacetylation of lysine residues on the N-terminal part of the core histones (H2A, H2B, H3 and H4). Histone deacetylation gives a tag for epigenetic repression and plays an important role in transcriptional regulation, cell cycle progression and developmental events. Histone deacetylases act via the formation of large multiprotein complexes. Involved in muscle maturation via its interaction with the myocyte enhancer factors such as MEF2A, MEF2C and MEF2D. Involved in the MTA1-mediated epigenetic regulation of ESR1 expression in breast cancer. Deacetylates HSPA1A and HSPA1B at 'Lys-77' leading to their preferential binding to co-chaperone STUB1. In Homo sapiens (Human), this protein is Histone deacetylase 4.